A 187-amino-acid chain; its full sequence is Peptidyl-tRNA hydrolase (187 aa).

Y14 is a binding site for tRNA. H19 (proton acceptor) is an active-site residue. The tRNA site is built by Y64, N66, and N112.

It belongs to the PTH family. Monomer.

The protein localises to the cytoplasm. It carries out the reaction an N-acyl-L-alpha-aminoacyl-tRNA + H2O = an N-acyl-L-amino acid + a tRNA + H(+). In terms of biological role, hydrolyzes ribosome-free peptidyl-tRNAs (with 1 or more amino acids incorporated), which drop off the ribosome during protein synthesis, or as a result of ribosome stalling. Catalyzes the release of premature peptidyl moieties from peptidyl-tRNA molecules trapped in stalled 50S ribosomal subunits, and thus maintains levels of free tRNAs and 50S ribosomes. This is Peptidyl-tRNA hydrolase from Clostridium acetobutylicum (strain ATCC 824 / DSM 792 / JCM 1419 / IAM 19013 / LMG 5710 / NBRC 13948 / NRRL B-527 / VKM B-1787 / 2291 / W).